The primary structure comprises 629 residues: Phosphomethylpyrimidine synthase (629 aa).

Residues 1–20 are disordered; the sequence is MSTTLKNAAHLSESAQVDSG. Residues N233, M262, Y291, H327, 347-349, 388-391, and E427 contribute to the substrate site; these read SRG and DGLR. Residue H431 coordinates Zn(2+). A substrate-binding site is contributed by Y454. H495 contributes to the Zn(2+) binding site. [4Fe-4S] cluster contacts are provided by C575, C578, and C583.

Belongs to the ThiC family. In terms of assembly, homodimer. [4Fe-4S] cluster is required as a cofactor.

It catalyses the reaction 5-amino-1-(5-phospho-beta-D-ribosyl)imidazole + S-adenosyl-L-methionine = 4-amino-2-methyl-5-(phosphooxymethyl)pyrimidine + CO + 5'-deoxyadenosine + formate + L-methionine + 3 H(+). It functions in the pathway cofactor biosynthesis; thiamine diphosphate biosynthesis. In terms of biological role, catalyzes the synthesis of the hydroxymethylpyrimidine phosphate (HMP-P) moiety of thiamine from aminoimidazole ribotide (AIR) in a radical S-adenosyl-L-methionine (SAM)-dependent reaction. The sequence is that of Phosphomethylpyrimidine synthase from Pseudomonas savastanoi pv. phaseolicola (strain 1448A / Race 6) (Pseudomonas syringae pv. phaseolicola (strain 1448A / Race 6)).